Reading from the N-terminus, the 88-residue chain is Large ribosomal subunit protein bL27 (88 aa).

The disordered stretch occupies residues 1-24 (MAHKKAGGSSRNGRDSEGRRLGVK).

This sequence belongs to the bacterial ribosomal protein bL27 family.

The protein is Large ribosomal subunit protein bL27 of Methylobacterium radiotolerans (strain ATCC 27329 / DSM 1819 / JCM 2831 / NBRC 15690 / NCIMB 10815 / 0-1).